A 108-amino-acid chain; its full sequence is UPF0060 membrane protein RER_49640 (108 aa).

4 consecutive transmembrane segments (helical) span residues 8–28 (LLFVLAALLEIGGAWLVWQGI), 33–53 (GWIWVGLGVISLGLYGLVATM), 62–82 (ILAAYGGIFVAGSLLWAVVMD), and 87–107 (DRFDIAGALICLVGVGVIMYA).

Belongs to the UPF0060 family.

The protein resides in the cell membrane. In Rhodococcus erythropolis (strain PR4 / NBRC 100887), this protein is UPF0060 membrane protein RER_49640.